Reading from the N-terminus, the 1009-residue chain is Protein WBSCR14 homolog (1009 aa).

4 disordered regions span residues 1–20 (MSRGQIIHSGHFMCSNPHDD), 304–354 (MSLG…LHQM), 488–531 (NNQP…DPMM), and 686–728 (ILES…EQEA). Composition is skewed to polar residues over residues 324 to 350 (RTPTNDQPSISAQQIPQMRRSASSSAS) and 499 to 508 (RSNLLPTQND). Over residues 511-526 (LPQFLQSTQPTPQPQS) the composition is skewed to low complexity. A compositionally biased stretch (polar residues) spans 686-695 (ILESPSTSGD). In terms of domain architecture, bHLH spans 803-856 (RKRILHLHAEQNRRSALKDGFDQLMDIIPDLYSGGVKPTNAVVLAKSADHIRRL). The interval 856–877 (LQAEKWDKTQKIDEAKAKIEKL) is leucine-zipper.

As to expression, expressed in intestine, neurons, muscle, hypodermis, excretory cell and other tissues.

It is found in the nucleus. The protein resides in the cytoplasm. It localises to the mitochondrion. Functionally, transcription factor that binds to the E box motif 5'-CACGTG-3', probably in a heterodimeric complex with mxl-2. Involved in modulating longevity in response to TOR signaling, dietary restriction, the decline in protein homeostasis associated with normal aging, germline signaling and the insulin-like signaling pathway. Plays a role in autophagy. Involved in regulating migration of the ray 1 precursor cells in the male tail, acting in concert with Wnt and semaphorin signaling pathways. Regulates transcription of genes encoding extracellular matrix (ECM) components which may contribute to the substratum required for migration of the neighboring ray 1 precursor cells. Involved in repressing infection by the microsporidian pathogen N.parisii, probably acting independently of its canonical partner, mxl-2. This Caenorhabditis elegans protein is Protein WBSCR14 homolog (mml-1).